The sequence spans 1931 residues: Chitin synthase 5 (1931 aa).

Positions 11–777 (LGVTDLSSLA…LFRFLEDRLR (767 aa)) constitute a Myosin motor domain. An ATP-binding site is contributed by 122–129 (GPTGSGKS). N-linked (GlcNAc...) asparagine glycans are attached at residues asparagine 510, asparagine 538, and asparagine 676. An actin-binding region spans residues 655–677 (VDSLLKSFDQTQTWYIFALRPND). Residues 798–817 (DPFSPHRYQPTSFDSQDHVY) form a disordered region. N-linked (GlcNAc...) asparagine glycosylation is present at asparagine 842. Transmembrane regions (helical) follow at residues 912–932 (WVWLCSILTWWIPGFLLSKIA) and 951–971 (MIIWFICGCAIFVIAILGPVI). N-linked (GlcNAc...) asparagine glycans are attached at residues asparagine 1062, asparagine 1078, and asparagine 1146. The chain crosses the membrane as a helical span at residues 1220 to 1240 (ILLALSCVMVAVIGFKFLSAL). An N-linked (GlcNAc...) asparagine glycan is attached at asparagine 1583. A run of 3 helical transmembrane segments spans residues 1615–1635 (LSTIIAPVTVAYIVYLIYLIV), 1641–1661 (IPTLSIIMLAAIYGLQAMIFI), and 1668–1688 (MIAWMIFYICAIPVFSFLLPL). The tract at residues 1826–1847 (AHRPSLDDTSSFHQPYQPAPRP) is disordered. A DEK-C domain is found at 1875–1930 (AITDSQLERSIRKICANAELDKLTKKGVRKELEREYGVELTERREAINRLVEKVLT).

It in the N-terminal section; belongs to the TRAFAC class CC myosin-kinesin ATPase superfamily. Myosin family. The protein in the C-terminal section; belongs to the chitin synthase family. Class V subfamily.

Its subcellular location is the cell membrane. The protein resides in the cell septum. It localises to the cell tip. The catalysed reaction is [(1-&gt;4)-N-acetyl-beta-D-glucosaminyl](n) + UDP-N-acetyl-alpha-D-glucosamine = [(1-&gt;4)-N-acetyl-beta-D-glucosaminyl](n+1) + UDP + H(+). Polymerizes chitin, a structural polymer of the cell wall and septum, by transferring the sugar moiety of UDP-GlcNAc to the non-reducing end of the growing chitin polymer. Produces a large proportion of the chitin that is not deacetylated to chitosan. The protein is Chitin synthase 5 of Cryptococcus neoformans var. grubii serotype A (strain H99 / ATCC 208821 / CBS 10515 / FGSC 9487) (Filobasidiella neoformans var. grubii).